Consider the following 72-residue polypeptide: Mitotic-spindle organizing protein 1 (72 aa).

The protein belongs to the MOZART1 family. In terms of assembly, part of the gamma-tubulin complex.

It localises to the cytoplasm. The protein localises to the cytoskeleton. Its subcellular location is the microtubule organizing center. The protein resides in the centrosome. It is found in the spindle. Required for gamma-tubulin complex recruitment to the centrosome. The protein is Mitotic-spindle organizing protein 1 (mzt1) of Xenopus laevis (African clawed frog).